A 385-amino-acid polypeptide reads, in one-letter code: Multidrug resistance protein MdtE (385 aa).

The N-terminal stretch at 1-20 (MNRRRKLLIPLLFCGAMLTA) is a signal peptide. A lipid anchor (N-palmitoyl cysteine) is attached at Cys-21. Cys-21 is lipidated: S-diacylglycerol cysteine.

The protein belongs to the membrane fusion protein (MFP) (TC 8.A.1) family. As to quaternary structure, homotrimer. Part of the tripartite efflux system MdtEF-TolC, which is composed of an inner membrane transporter, MdtF, a membrane fusion protein, MdtE, and an outer membrane component, TolC. The complex forms a large protein conduit and can translocate molecules across both the inner and outer membranes.

It localises to the cell inner membrane. Functionally, part of the tripartite efflux system MdtEF-TolC, which confers resistance to various compounds. The chain is Multidrug resistance protein MdtE (mdtE) from Escherichia coli O6:H1 (strain CFT073 / ATCC 700928 / UPEC).